The sequence spans 380 residues: Protein Wnt-5a (380 aa).

The N-terminal stretch at 1-35 is a signal peptide; sequence MKKSIGILSPGVALGMAGSAMSSKFFLVALAIFFS. A propeptide spanning residues 36–61 is cleaved from the precursor; that stretch reads FAQVVIEANSWWSLGMNNPVQMSEVY. Cysteines 104 and 115 form a disulfide. Residues Asn114 and Asn120 are each glycosylated (N-linked (GlcNAc...) asparagine). Cystine bridges form between Cys154–Cys162, Cys164–Cys182, Cys238–Cys252, Cys240–Cys247, Cys309–Cys340, Cys325–Cys335, Cys339–Cys379, Cys355–Cys370, Cys357–Cys367, and Cys362–Cys363. Ser244 carries O-palmitoleoyl serine; by PORCN lipidation. 2 N-linked (GlcNAc...) asparagine glycosylation sites follow: Asn312 and Asn326.

It belongs to the Wnt family. Forms a soluble 1:1 complex with AFM; this prevents oligomerization and is required for prolonged biological activity. The complex with AFM may represent the physiological form in body fluids. Homooligomer; disulfide-linked, leading to inactivation (in vitro). Interacts with PORCN. Interacts with WLS. Interacts with glypican GCP3. Interacts with PKD1 (via extracellular domain). Interacts with TMEM67. In terms of processing, glycosylation is necessary for secretion but not for activity. Post-translationally, palmitoleoylation is required for efficient binding to frizzled receptors. Depalmitoleoylation leads to Wnt signaling pathway inhibition. Proteolytic processing by TIKI1 and TIKI2 promotes oxidation and formation of large disulfide-bond oligomers, leading to inactivation of WNT5A. In terms of tissue distribution, expression is increased in differentiated thyroid carcinomas compared to normal thyroid tissue and anaplastic thyroid tumors where expression is low or undetectable. Expression is found in thyrocytes but not in stromal cells (at protein level). Detected in neonate heart and lung.

The protein resides in the secreted. Its subcellular location is the extracellular space. The protein localises to the extracellular matrix. Functionally, ligand for members of the frizzled family of seven transmembrane receptors. Can activate or inhibit canonical Wnt signaling, depending on receptor context. In the presence of FZD4, activates beta-catenin signaling. In the presence of ROR2, inhibits the canonical Wnt pathway by promoting beta-catenin degradation through a GSK3-independent pathway which involves down-regulation of beta-catenin-induced reporter gene expression. Suppression of the canonical pathway allows chondrogenesis to occur and inhibits tumor formation. Stimulates cell migration. Decreases proliferation, migration, invasiveness and clonogenicity of carcinoma cells and may act as a tumor suppressor. Mediates motility of melanoma cells. Required during embryogenesis for extension of the primary anterior-posterior axis and for outgrowth of limbs and the genital tubercle. Inhibits type II collagen expression in chondrocytes. The chain is Protein Wnt-5a (WNT5A) from Homo sapiens (Human).